The sequence spans 512 residues: MELLLNPSLFSLLPLLLFIIFLFKRLYTSPTCQRKLPPSPPKLPVIGNLHQVGSLPHRSLRSLSQKYGPLMLLHFGSVPVLVASSAEAACEIMKSHDIVFSTRPKSNISDKLTYGSKDIAFSPYGEYWRRVRSICVNHLLSNQRVKSFRHVIEEETKKMIENINERCVSSSSPVNLSDFTLTLTNSIICTIAFGRKHCDVENMRKIKAMLMGFEEILSVFDAGDYIPWLAWVNRFTGLDAKLKTLAKQGDELVEGVIDAHMKRKKAEAQSYDAADQAKGTDFMDILLDIYQGTVPGFALDRDSVKAIILDMFTAGTDTIYTSIDWTIAELLRHPRVLKKLHTEVRQVAQGKSEITEEDLGKMEYLKVVIKETLRLHPPIPLLLPRESTQEISIMGYHILAGTQVIVNAWAIGRDPLYWENPEEFRPERFMGSDMDFRGFNFEYTPFGAGRRSCPALAFAIAVVELTIAKLVQRFDFALPDEAKPEDLDMTEASGTTVHKQLPIVVNVVATRN.

Residues L3–F23 traverse the membrane as a helical segment. Heme is bound at residue C453.

Belongs to the cytochrome P450 family. It depends on heme as a cofactor.

The protein localises to the membrane. The catalysed reaction is norfluorocurarine + reduced [NADPH--hemoprotein reductase] + O2 = 18-hydroxynorfluorocurarine + oxidized [NADPH--hemoprotein reductase] + H2O + H(+). It participates in alkaloid biosynthesis. Monooxygenase involved in the biosynthesis of curare monoterpene indole alkaloids (MIAs), natural products such as diaboline, a pharmacologically active compound used to regulate blood pressure. Curare alkaloids act as animal glycine receptor antagonists. Catalyzes the conversion of norfluorocurarine to 18-OH norfluorocurarine. This chain is Norfluorocurarine oxidase, found in Strychnos sp.